A 141-amino-acid chain; its full sequence is Large ribosomal subunit protein uL11 (141 aa).

It belongs to the universal ribosomal protein uL11 family. As to quaternary structure, part of the ribosomal stalk of the 50S ribosomal subunit. Interacts with L10 and the large rRNA to form the base of the stalk. L10 forms an elongated spine to which L12 dimers bind in a sequential fashion forming a multimeric L10(L12)X complex. Post-translationally, one or more lysine residues are methylated.

In terms of biological role, forms part of the ribosomal stalk which helps the ribosome interact with GTP-bound translation factors. This chain is Large ribosomal subunit protein uL11, found in Alkaliphilus oremlandii (strain OhILAs) (Clostridium oremlandii (strain OhILAs)).